Here is a 65-residue protein sequence, read N- to C-terminus: Large ribosomal subunit protein bL35 (65 aa).

Positions M1–P52 are disordered. Positions Q26–L44 are enriched in basic residues.

The protein belongs to the bacterial ribosomal protein bL35 family.

The polypeptide is Large ribosomal subunit protein bL35 (Methylococcus capsulatus (strain ATCC 33009 / NCIMB 11132 / Bath)).